The chain runs to 476 residues: Glycogen synthase (476 aa).

Lysine 15 lines the ADP-alpha-D-glucose pocket.

It belongs to the glycosyltransferase 1 family. Bacterial/plant glycogen synthase subfamily.

It carries out the reaction [(1-&gt;4)-alpha-D-glucosyl](n) + ADP-alpha-D-glucose = [(1-&gt;4)-alpha-D-glucosyl](n+1) + ADP + H(+). It participates in glycan biosynthesis; glycogen biosynthesis. Synthesizes alpha-1,4-glucan chains using ADP-glucose. The polypeptide is Glycogen synthase (Bacillus cereus (strain ATCC 14579 / DSM 31 / CCUG 7414 / JCM 2152 / NBRC 15305 / NCIMB 9373 / NCTC 2599 / NRRL B-3711)).